We begin with the raw amino-acid sequence, 1623 residues long: Histone-lysine N-methyltransferase set-9 (1623 aa).

Disordered stretches follow at residues 1-102, 112-131, 198-227, 448-600, and 645-781; these read MADG…APQQ, AADA…RPTE, EDAV…SVAS, QRPG…VLRP, and TGQS…DEAA. Residues 62-71 are compositionally biased toward basic and acidic residues; it reads HQMENQEFYH. Residues 77–100 show a composition bias toward low complexity; it reads EPQQIPQIPVFQPAAYNPPNYVAP. A compositionally biased stretch (polar residues) spans 206–227; sequence PGTQYRRNQQAGGGLPSTSVAS. Residues 554–573 show a composition bias toward basic and acidic residues; the sequence is MTQEEKNAHFARLTTDKEKP. A compositionally biased stretch (pro residues) spans 587–597; the sequence is PHVPPPPPPLV. Polar residues predominate over residues 645-669; sequence TGQSGSSAAARQRTVSGSAARAQTY. A compositionally biased stretch (basic residues) spans 723–733; sequence HRPRGRPKGTR. A compositionally biased stretch (acidic residues) spans 772–781; that stretch reads SESEGIDEAA. The segment at 786-834 adopts a PHD-type zinc-finger fold; it reads TMRCHCGMDHGDGDTIECEGCKTWQHMACMGLTLKSNTSKYKCEMCLPR. The disordered stretch occupies residues 857–895; sequence AARKQKRKSEPVEQKQKSSQPSTSRKSAPMALQQPAEPR. A compositionally biased stretch (polar residues) spans 873 to 882; that stretch reads KSSQPSTSRK. Residues 965-1056 form the SET domain; it reads MSSEVKRQPG…RNTEVTLPFD (92 aa). 2 stretches are compositionally biased toward basic and acidic residues: residues 1089 to 1157 and 1172 to 1194; these read AERH…KKME and AREE…EGKR. 2 disordered regions span residues 1089–1318 and 1356–1623; these read AERH…NVAP and LLAG…TRWN. Positions 1093–1201 form a coiled coil; sequence RAMDHKKQEA…GKRKEARRRS (109 aa). Residues 1242 to 1252 show a composition bias toward polar residues; the sequence is TTQPSTSSFAT. Residues 1282 to 1293 show a composition bias toward low complexity; it reads ATTVATPKATTA. Residues 1364–1401 adopt a coiled-coil conformation; the sequence is FSEVRAQIEEENRMKERSRKREAKKKAVEKEKKEHRKE. 4 stretches are compositionally biased toward basic and acidic residues: residues 1365–1378, 1388–1406, 1413–1429, and 1447–1464; these read SEVR…NRMK, KKAV…KKTN, KSEK…EKKP, and KKTE…ESSS. Over residues 1533 to 1544 the composition is skewed to polar residues; it reads SSSNTAPTTTIA.

It belongs to the class V-like SAM-binding methyltransferase superfamily. Predominantly expressed in the germline (at protein level).

It localises to the nucleus. It catalyses the reaction L-lysyl-[histone] + S-adenosyl-L-methionine = N(6)-methyl-L-lysyl-[histone] + S-adenosyl-L-homocysteine + H(+). Functionally, histone methyltransferase. Might play a role in transcriptional regulation. Together with set-26, negatively regulates lifespan in a germline-independent, partially daf-16-dependent fashion. Together with set-26, plays a role in germline development and maintenance and might play a role in the restriction of the trimethylation mark on histone H3 'Lys-4'(H3K4me3) to target genes specifically in the germline. In Caenorhabditis elegans, this protein is Histone-lysine N-methyltransferase set-9.